Here is an 839-residue protein sequence, read N- to C-terminus: Probable beta-glucosidase I (839 aa).

N-linked (GlcNAc...) asparagine glycosylation is present at N197. Residue D225 is part of the active site. One can recognise a PA14 domain in the interval D396 to V556. N494 carries N-linked (GlcNAc...) asparagine glycosylation.

It belongs to the glycosyl hydrolase 3 family.

It localises to the secreted. It carries out the reaction Hydrolysis of terminal, non-reducing beta-D-glucosyl residues with release of beta-D-glucose.. The protein operates within glycan metabolism; cellulose degradation. Functionally, beta-glucosidases are one of a number of cellulolytic enzymes, and catalyze the last step releasing glucose from the inhibitory cellobiose. This Emericella nidulans (strain FGSC A4 / ATCC 38163 / CBS 112.46 / NRRL 194 / M139) (Aspergillus nidulans) protein is Probable beta-glucosidase I (bglI).